The chain runs to 334 residues: Probable tRNA pseudouridine synthase B (334 aa).

Aspartate 82 (nucleophile) is an active-site residue. The 76-residue stretch at 250-325 (LPKIWIKDSA…IAVDVEKVFM (76 aa)) folds into the PUA domain.

It belongs to the pseudouridine synthase TruB family. Type 2 subfamily.

The enzyme catalyses uridine(55) in tRNA = pseudouridine(55) in tRNA. In terms of biological role, could be responsible for synthesis of pseudouridine from uracil-55 in the psi GC loop of transfer RNAs. This is Probable tRNA pseudouridine synthase B from Pyrococcus horikoshii (strain ATCC 700860 / DSM 12428 / JCM 9974 / NBRC 100139 / OT-3).